Consider the following 343-residue polypeptide: Ferrochelatase (343 aa).

His191 and Glu270 together coordinate Fe cation.

This sequence belongs to the ferrochelatase family.

Its subcellular location is the cytoplasm. The enzyme catalyses heme b + 2 H(+) = protoporphyrin IX + Fe(2+). It participates in porphyrin-containing compound metabolism; protoheme biosynthesis; protoheme from protoporphyrin-IX: step 1/1. Functionally, catalyzes the ferrous insertion into protoporphyrin IX. The polypeptide is Ferrochelatase (Phenylobacterium zucineum (strain HLK1)).